Consider the following 639-residue polypeptide: ATP-dependent zinc metalloprotease FtsH (639 aa).

Residues 1–15 lie on the Cytoplasmic side of the membrane; the sequence is MDNEKQASPPPAAPP. The chain crosses the membrane as a helical span at residues 16-36; sequence LNWRYLLWIILLGIFLISWLG. Residues 37–123 lie on the Periplasmic side of the membrane; it reads NAGRQAGDEI…VQAKSEEPSL (87 aa). Residues 124–144 form a helical membrane-spanning segment; that stretch reads WMQAIIGILPWFLILGLIFYV. Residues 145 to 639 lie on the Cytoplasmic side of the membrane; sequence SYRMQQRMMG…HNEAVATGAG (495 aa). 221–228 is an ATP binding site; the sequence is GRPGTGKT. His-442 contributes to the Zn(2+) binding site. Residue Glu-443 is part of the active site. Zn(2+)-binding residues include His-446 and Asp-518.

In the central section; belongs to the AAA ATPase family. This sequence in the C-terminal section; belongs to the peptidase M41 family. Homohexamer. Requires Zn(2+) as cofactor.

The protein resides in the cell inner membrane. Its function is as follows. Acts as a processive, ATP-dependent zinc metallopeptidase for both cytoplasmic and membrane proteins. Plays a role in the quality control of integral membrane proteins. The protein is ATP-dependent zinc metalloprotease FtsH of Nitrosococcus oceani (strain ATCC 19707 / BCRC 17464 / JCM 30415 / NCIMB 11848 / C-107).